A 390-amino-acid polypeptide reads, in one-letter code: tRNA-specific 2-thiouridylase MnmA (390 aa).

Residues Gly29–Ser36 and Leu55 each bind ATP. The active-site Nucleophile is Cys116. Cys116 and Cys225 are oxidised to a cystine. Gly141 lines the ATP pocket. The tract at residues Lys175 to Gln177 is interaction with tRNA. Catalysis depends on Cys225, which acts as the Cysteine persulfide intermediate. The segment at Arg330–Tyr331 is interaction with tRNA.

The protein belongs to the MnmA/TRMU family.

It localises to the cytoplasm. The catalysed reaction is S-sulfanyl-L-cysteinyl-[protein] + uridine(34) in tRNA + AH2 + ATP = 2-thiouridine(34) in tRNA + L-cysteinyl-[protein] + A + AMP + diphosphate + H(+). In terms of biological role, catalyzes the 2-thiolation of uridine at the wobble position (U34) of tRNA, leading to the formation of s(2)U34. The protein is tRNA-specific 2-thiouridylase MnmA of Prochlorococcus marinus (strain MIT 9515).